The sequence spans 217 residues: Large ribosomal subunit protein uL3 (217 aa).

Residues 129 to 162 (SRGPMSHGSKNHRAPGSTGAGTTPGRIYPGKRMA) form a disordered region. Low complexity predominate over residues 142-153 (APGSTGAGTTPG).

This sequence belongs to the universal ribosomal protein uL3 family. As to quaternary structure, part of the 50S ribosomal subunit. Forms a cluster with proteins L14 and L19.

In terms of biological role, one of the primary rRNA binding proteins, it binds directly near the 3'-end of the 23S rRNA, where it nucleates assembly of the 50S subunit. The polypeptide is Large ribosomal subunit protein uL3 (Prochlorococcus marinus (strain MIT 9215)).